A 340-amino-acid chain; its full sequence is N-acetyl-gamma-glutamyl-phosphate reductase (340 aa).

Residue Cys-148 is part of the active site.

This sequence belongs to the NAGSA dehydrogenase family. Type 1 subfamily.

The protein localises to the cytoplasm. The catalysed reaction is N-acetyl-L-glutamate 5-semialdehyde + phosphate + NADP(+) = N-acetyl-L-glutamyl 5-phosphate + NADPH + H(+). The protein operates within amino-acid biosynthesis; L-arginine biosynthesis; N(2)-acetyl-L-ornithine from L-glutamate: step 3/4. Its function is as follows. Catalyzes the NADPH-dependent reduction of N-acetyl-5-glutamyl phosphate to yield N-acetyl-L-glutamate 5-semialdehyde. This Methanosarcina mazei (strain ATCC BAA-159 / DSM 3647 / Goe1 / Go1 / JCM 11833 / OCM 88) (Methanosarcina frisia) protein is N-acetyl-gamma-glutamyl-phosphate reductase.